Consider the following 336-residue polypeptide: Inositol 2-dehydrogenase (336 aa).

Belongs to the Gfo/Idh/MocA family. Homotetramer.

It catalyses the reaction myo-inositol + NAD(+) = scyllo-inosose + NADH + H(+). Functionally, involved in the oxidation of myo-inositol (MI) to 2-keto-myo-inositol (2KMI or 2-inosose). The protein is Inositol 2-dehydrogenase of Salmonella agona (strain SL483).